The sequence spans 235 residues: uncharacterized protein (235 aa).

One can recognise an ABC transporter domain in the interval 2–235 (IKLKNVTKTY…EEKLRGFDDR (234 aa)). 38 to 45 (GPSGSGKS) contributes to the ATP binding site.

This sequence belongs to the ABC transporter superfamily.

This is an uncharacterized protein from Methanocaldococcus jannaschii (strain ATCC 43067 / DSM 2661 / JAL-1 / JCM 10045 / NBRC 100440) (Methanococcus jannaschii).